The primary structure comprises 343 residues: MKNQWKTSDFDYNLPVELIAQRPLADRSGSRLLYIDRSRRTVSHRQFNGFVEQVKPNDLVVLNDTKVIPARLFGHKQTGGKVECLVERILSKDRFLAHIRASKAPKLGSQIIIADNFKIIIEGRYNDLFECVLHSSASILDLLYQHGRIPLPPYIQREPDKDDQARYQTIFAERAGAVAAPTAGLHFNEETFDALRKKGAAITYVTLHVGAGTFQPVRADSLADHRMHHEWMEVSKAVCDAIAKCRKNNGRVIAVGTTVMRCLETATKNSECRPYAGETDLFIYPGFQFNCVDALLTNFHLPKSTLLMLVCAFGGYELVMEAYQKAVENRYRFFSYGDAMLIS.

The protein belongs to the QueA family. In terms of assembly, monomer.

Its subcellular location is the cytoplasm. The catalysed reaction is 7-aminomethyl-7-carbaguanosine(34) in tRNA + S-adenosyl-L-methionine = epoxyqueuosine(34) in tRNA + adenine + L-methionine + 2 H(+). It functions in the pathway tRNA modification; tRNA-queuosine biosynthesis. Its function is as follows. Transfers and isomerizes the ribose moiety from AdoMet to the 7-aminomethyl group of 7-deazaguanine (preQ1-tRNA) to give epoxyqueuosine (oQ-tRNA). The polypeptide is S-adenosylmethionine:tRNA ribosyltransferase-isomerase (Coxiella burnetii (strain RSA 331 / Henzerling II)).